Here is a 342-residue protein sequence, read N- to C-terminus: Nucleoid-associated protein Sbal223_1817 (342 aa).

Belongs to the YejK family.

It is found in the cytoplasm. Its subcellular location is the nucleoid. The sequence is that of Nucleoid-associated protein Sbal223_1817 from Shewanella baltica (strain OS223).